We begin with the raw amino-acid sequence, 317 residues long: Taste receptor type 2 member 14 (317 aa).

Residues 1–7 (MGGVIKS) lie on the Extracellular side of the membrane. The helical transmembrane segment at 8–28 (IFTFVLIVEFIIGNLGNSFIA) threads the bilayer. Over 29–55 (LVNCIDWVKGRKISSVDRILTALAISK) the chain is Cytoplasmic. The helical transmembrane segment at 56–76 (ISLVWLIFGSWCVSVFFPALF) threads the bilayer. Topologically, residues 77–87 (ATEKMFRMLTN) are extracellular. Cholesterol contacts are provided by Thr-86 and Trp-89. A helical membrane pass occupies residues 88–108 (IWTVINHFSVWLATGLGTFYF). Residues 109-129 (LKIANFSNSIFLYLKWRVKKV) lie on the Cytoplasmic side of the membrane. Residues 130 to 150 (VLVLLLVTSVFLFLNIALINI) traverse the membrane as a helical segment. Topologically, residues 151 to 184 (HINASINGYRRNKTCSSDSSNFTRFSSLIVLTST) are extracellular. Asn-153, Asn-162, and Asn-171 each carry an N-linked (GlcNAc...) asparagine glycan. Val-180 contacts cholesterol. The helical transmembrane segment at 185 to 205 (VFIFIPFTLSLAMFLLLIFSM) threads the bilayer. At 206 to 232 (WKHRKKMQHTVKRSGDASTKAHRGVKS) the chain is on the cytoplasmic side. Residues 233 to 253 (MMTFFLLYAIFSLSFFISVWT) traverse the membrane as a helical segment. At 254-261 (SERLEENL) the chain is on the extracellular side. The chain crosses the membrane as a helical span at residues 262–282 (IILSQVMGMAYPSCHSCVLIL). 2 residues coordinate cholesterol: Ser-265 and Met-268. Topologically, residues 283–317 (GNKKLRQASLSVLLWLRYMFKDGEPSGHKEFRESS) are cytoplasmic.

It belongs to the G-protein coupled receptor T2R family. As to quaternary structure, core component of the TAS2R14-GNAI1 complex, consisting of TAS2R14, GNAI1, GNB1 and GNG2; within the complex interacts with GNAI1. Core component of the TAS2R14-GNAT3 complex, consisting of TAS2R14, GNAT3, GNB1 and GNG2; within the complex interacts with GNAT3. Core component of the TAS2R14-GNAS2 complex, consisting of TAS2R14, GNAS2, GNB1 and GNG2; within the complex interacts with GNAS2.

It localises to the membrane. It catalyses the reaction Ca(2+)(in) = Ca(2+)(out). It carries out the reaction 3',5'-cyclic AMP(in) = 3',5'-cyclic AMP(out). Its activity is regulated as follows. Basal activity is enhanced by binding to bitter tastants, such as flufenamic acid and aristolochic acid. Regulated by cholesterol in a concentration-dependent manner. Its function is as follows. Gustducin-linked G-protein coupled receptor that plays a role in the perception of bitterness. The activity of this receptor stimulates GNAT3, activating the gustducin G-protein pathway. Likely plays a role in sensing the chemical composition of the gastrointestinal content and other extra-oral tissues via the inhibitory G-protein pathways. The chain is Taste receptor type 2 member 14 (TAS2R14) from Pan paniscus (Pygmy chimpanzee).